A 506-amino-acid chain; its full sequence is Probable Xaa-Pro aminopeptidase BDBG_08406 (506 aa).

Mn(2+) is bound by residues Asp285, Asp296, Glu433, and Glu471.

Belongs to the peptidase M24B family. Mn(2+) is required as a cofactor.

It carries out the reaction Release of any N-terminal amino acid, including proline, that is linked to proline, even from a dipeptide or tripeptide.. Catalyzes the removal of a penultimate prolyl residue from the N-termini of peptides. In Blastomyces gilchristii (strain SLH14081) (Blastomyces dermatitidis), this protein is Probable Xaa-Pro aminopeptidase BDBG_08406.